We begin with the raw amino-acid sequence, 156 residues long: Ribonuclease H (156 aa).

Residues methionine 1–asparagine 142 enclose the RNase H type-1 domain. Residues aspartate 10, glutamate 48, aspartate 70, and aspartate 134 each contribute to the Mg(2+) site.

This sequence belongs to the RNase H family. Monomer. Mg(2+) serves as cofactor.

The protein resides in the cytoplasm. It catalyses the reaction Endonucleolytic cleavage to 5'-phosphomonoester.. In terms of biological role, endonuclease that specifically degrades the RNA of RNA-DNA hybrids. This Photorhabdus luminescens (Xenorhabdus luminescens) protein is Ribonuclease H.